A 154-amino-acid chain; its full sequence is Endoribonuclease YbeY (154 aa).

Residues histidine 113, histidine 117, and histidine 123 each contribute to the Zn(2+) site.

This sequence belongs to the endoribonuclease YbeY family. Zn(2+) serves as cofactor.

It is found in the cytoplasm. Its function is as follows. Single strand-specific metallo-endoribonuclease involved in late-stage 70S ribosome quality control and in maturation of the 3' terminus of the 16S rRNA. This Aeromonas salmonicida (strain A449) protein is Endoribonuclease YbeY.